Consider the following 294-residue polypeptide: Ribosomal RNA small subunit methyltransferase I (294 aa).

The protein belongs to the methyltransferase superfamily. RsmI family.

It is found in the cytoplasm. The enzyme catalyses cytidine(1402) in 16S rRNA + S-adenosyl-L-methionine = 2'-O-methylcytidine(1402) in 16S rRNA + S-adenosyl-L-homocysteine + H(+). In terms of biological role, catalyzes the 2'-O-methylation of the ribose of cytidine 1402 (C1402) in 16S rRNA. The chain is Ribosomal RNA small subunit methyltransferase I from Mesorhizobium japonicum (strain LMG 29417 / CECT 9101 / MAFF 303099) (Mesorhizobium loti (strain MAFF 303099)).